The following is an 827-amino-acid chain: Periplasmic nitrate reductase (827 aa).

Positions 1–32 (MELSRRDFMKANAAVAAAAAAGIVLPVKNVQA) form a signal peptide, tat-type signal. The 4Fe-4S Mo/W bis-MGD-type domain maps to 37–93 (IKWDKAPCRFCGTGCSVLVGTKDGRVVATQGDPDAEVNRGLNCIKGYFLSKIMYGAD). Residues Cys44, Cys47, Cys51, and Cys79 each coordinate [4Fe-4S] cluster. Mo-bis(molybdopterin guanine dinucleotide) is bound by residues Lys81, Gln148, Asn173, Cys177, 210–217 (WGSNMAEM), 241–245 (STFEH), Met371, Gln375, Asn481, 507–508 (SD), Lys530, Asp557, and 717–726 (TGRVLEHWHT). Position 793 (Phe793) interacts with substrate. 2 residues coordinate Mo-bis(molybdopterin guanine dinucleotide): Asn801 and Lys818.

Belongs to the prokaryotic molybdopterin-containing oxidoreductase family. NasA/NapA/NarB subfamily. In terms of assembly, component of the periplasmic nitrate reductase NapAB complex composed of NapA and NapB. It depends on [4Fe-4S] cluster as a cofactor. Mo-bis(molybdopterin guanine dinucleotide) serves as cofactor. Post-translationally, predicted to be exported by the Tat system. The position of the signal peptide cleavage has not been experimentally proven.

The protein localises to the periplasm. The enzyme catalyses 2 Fe(II)-[cytochrome] + nitrate + 2 H(+) = 2 Fe(III)-[cytochrome] + nitrite + H2O. Functionally, catalytic subunit of the periplasmic nitrate reductase complex NapAB. Receives electrons from NapB and catalyzes the reduction of nitrate to nitrite. This chain is Periplasmic nitrate reductase, found in Haemophilus ducreyi (strain 35000HP / ATCC 700724).